The sequence spans 361 residues: Epoxyqueuosine reductase (361 aa).

Catalysis depends on Asp147, which acts as the Proton donor. In terms of domain architecture, 4Fe-4S ferredoxin-type spans 193-222 (VDPAMDSEHCGRCSACLDICPTAAFVGPYR). Cys202, Cys205, Cys208, Cys212, Cys228, Cys255, Cys258, and Cys262 together coordinate [4Fe-4S] cluster.

This sequence belongs to the QueG family. As to quaternary structure, monomer. The cofactor is cob(II)alamin. Requires [4Fe-4S] cluster as cofactor.

The protein localises to the cytoplasm. It carries out the reaction epoxyqueuosine(34) in tRNA + AH2 = queuosine(34) in tRNA + A + H2O. It participates in tRNA modification; tRNA-queuosine biosynthesis. Catalyzes the conversion of epoxyqueuosine (oQ) to queuosine (Q), which is a hypermodified base found in the wobble positions of tRNA(Asp), tRNA(Asn), tRNA(His) and tRNA(Tyr). The chain is Epoxyqueuosine reductase from Pseudomonas aeruginosa (strain ATCC 15692 / DSM 22644 / CIP 104116 / JCM 14847 / LMG 12228 / 1C / PRS 101 / PAO1).